Reading from the N-terminus, the 279-residue chain is Fatty acid desaturase 4-like 2, chloroplastic (279 aa).

Residues 1 to 30 constitute a chloroplast transit peptide; sequence MATSLQTKYTLNPITNNIPRSHRPSFLRVT. The next 3 helical transmembrane spans lie at 68–90, 98–118, and 178–198; these read LWVAAGCTTVFVSFSKSIIGAFG, SLAGFAGYILADLGSGVYHWA, and VVHGFVSMFAFCVLFCQLFHA.

Belongs to the fatty acid desaturase CarF family.

Its subcellular location is the plastid. The protein resides in the chloroplast membrane. It participates in lipid metabolism; fatty acid metabolism. Its function is as follows. Fatty acid desaturase involved in the production of chloroplast-specific phosphatidylglycerol molecular species. Catalyzes the formation of a trans double bond introduced close to the carboxyl group of palmitic acid, which is specifically esterified to the sn-2 glyceryl carbon of phosphatidylglycerol. The sequence is that of Fatty acid desaturase 4-like 2, chloroplastic (FAD4L2) from Arabidopsis thaliana (Mouse-ear cress).